The sequence spans 365 residues: Transcription factor MYB93 (365 aa).

HTH myb-type domains follow at residues 9 to 61 and 62 to 116; these read ENGL…TNYL and RPDI…KKKL. 2 consecutive DNA-binding regions (H-T-H motif) follow at residues 37-61 and 89-112; these read WRALPKLADLNRCGKSCRLRWTNYL and WSAIATHLQGRTDNEIKNFWNTHL.

As to quaternary structure, interacts with FBX5.

The protein localises to the nucleus. It localises to the cytoplasm. Transcription factor that acts as a negative regulator of lateral root (LR) development. Required for normal auxin responses during LR development. May be part of a negative feedback loop stimulated specifically in the endodermis upon LR initiation to ensure that LRs are formed only in the correct place. The sequence is that of Transcription factor MYB93 from Arabidopsis thaliana (Mouse-ear cress).